The primary structure comprises 379 residues: Cyclin-dependent kinase-like 4 (379 aa).

Residues tyrosine 4–phenylalanine 286 form the Protein kinase domain. Residues threonine 10–valine 18 and lysine 33 contribute to the ATP site. The [NKR]KIAxRE motif lies at lysine 45–glutamate 51. Aspartate 126 functions as the Proton acceptor in the catalytic mechanism.

It belongs to the protein kinase superfamily. CMGC Ser/Thr protein kinase family. CDC2/CDKX subfamily.

Its subcellular location is the cytoplasm. It catalyses the reaction L-seryl-[protein] + ATP = O-phospho-L-seryl-[protein] + ADP + H(+). The enzyme catalyses L-threonyl-[protein] + ATP = O-phospho-L-threonyl-[protein] + ADP + H(+). In Homo sapiens (Human), this protein is Cyclin-dependent kinase-like 4 (CDKL4).